The following is a 391-amino-acid chain: Formate-dependent phosphoribosylglycinamide formyltransferase (391 aa).

N(1)-(5-phospho-beta-D-ribosyl)glycinamide contacts are provided by residues 18–19 and Glu78; that span reads EL. ATP contacts are provided by residues Arg110, Lys151, 156 to 161, 191 to 194, and Glu199; these read SSGKGQ and EEFI. The 191-residue stretch at 115–305 folds into the ATP-grasp domain; it reads ELAHEELGIR…EFELHLRAIL (191 aa). Mg(2+)-binding residues include Glu264 and Glu276. N(1)-(5-phospho-beta-D-ribosyl)glycinamide contacts are provided by residues Asp283, Lys353, and 360-361; that span reads RR.

Belongs to the PurK/PurT family. As to quaternary structure, homodimer.

The catalysed reaction is N(1)-(5-phospho-beta-D-ribosyl)glycinamide + formate + ATP = N(2)-formyl-N(1)-(5-phospho-beta-D-ribosyl)glycinamide + ADP + phosphate + H(+). It functions in the pathway purine metabolism; IMP biosynthesis via de novo pathway; N(2)-formyl-N(1)-(5-phospho-D-ribosyl)glycinamide from N(1)-(5-phospho-D-ribosyl)glycinamide (formate route): step 1/1. Involved in the de novo purine biosynthesis. Catalyzes the transfer of formate to 5-phospho-ribosyl-glycinamide (GAR), producing 5-phospho-ribosyl-N-formylglycinamide (FGAR). Formate is provided by PurU via hydrolysis of 10-formyl-tetrahydrofolate. The protein is Formate-dependent phosphoribosylglycinamide formyltransferase of Nostoc sp. (strain PCC 7120 / SAG 25.82 / UTEX 2576).